The sequence spans 199 residues: 3-isopropylmalate dehydratase small subunit (199 aa).

The protein belongs to the LeuD family. LeuD type 1 subfamily. In terms of assembly, heterodimer of LeuC and LeuD.

It carries out the reaction (2R,3S)-3-isopropylmalate = (2S)-2-isopropylmalate. It functions in the pathway amino-acid biosynthesis; L-leucine biosynthesis; L-leucine from 3-methyl-2-oxobutanoate: step 2/4. Catalyzes the isomerization between 2-isopropylmalate and 3-isopropylmalate, via the formation of 2-isopropylmaleate. The sequence is that of 3-isopropylmalate dehydratase small subunit from Pseudoalteromonas translucida (strain TAC 125).